Consider the following 444-residue polypeptide: Tubulin beta chain (444 aa).

The GTP site is built by Gln11, Glu69, Ser138, Gly142, Thr143, Gly144, Asn204, and Asn226. Mg(2+) is bound at residue Glu69.

The protein belongs to the tubulin family. As to quaternary structure, dimer of alpha and beta chains. A typical microtubule is a hollow water-filled tube with an outer diameter of 25 nm and an inner diameter of 15 nM. Alpha-beta heterodimers associate head-to-tail to form protofilaments running lengthwise along the microtubule wall with the beta-tubulin subunit facing the microtubule plus end conferring a structural polarity. Microtubules usually have 13 protofilaments but different protofilament numbers can be found in some organisms and specialized cells. The cofactor is Mg(2+).

It is found in the cytoplasm. It localises to the cytoskeleton. Tubulin is the major constituent of microtubules, a cylinder consisting of laterally associated linear protofilaments composed of alpha- and beta-tubulin heterodimers. Microtubules grow by the addition of GTP-tubulin dimers to the microtubule end, where a stabilizing cap forms. Below the cap, tubulin dimers are in GDP-bound state, owing to GTPase activity of alpha-tubulin. The sequence is that of Tubulin beta chain (TBB) from Onchocerca gibsoni.